Here is a 136-residue protein sequence, read N- to C-terminus: ATP synthase epsilon chain (136 aa).

Residues 88–136 (DASSAESDLQAARNEVSKMEGQPASADKVKAQQSLDRARARVQAAKNQD) are disordered.

It belongs to the ATPase epsilon chain family. As to quaternary structure, F-type ATPases have 2 components, CF(1) - the catalytic core - and CF(0) - the membrane proton channel. CF(1) has five subunits: alpha(3), beta(3), gamma(1), delta(1), epsilon(1). CF(0) has three main subunits: a, b and c.

The protein resides in the cellular thylakoid membrane. In terms of biological role, produces ATP from ADP in the presence of a proton gradient across the membrane. In Synechococcus sp. (strain WH7803), this protein is ATP synthase epsilon chain.